The sequence spans 141 residues: Large ribosomal subunit protein uL11A (141 aa).

Belongs to the universal ribosomal protein uL11 family. As to quaternary structure, part of the ribosomal stalk of the 50S ribosomal subunit. Interacts with L10 and the large rRNA to form the base of the stalk. L10 forms an elongated spine to which L12 dimers bind in a sequential fashion forming a multimeric L10(L12)X complex. Post-translationally, one or more lysine residues are methylated.

In terms of biological role, forms part of the ribosomal stalk which helps the ribosome interact with GTP-bound translation factors. The chain is Large ribosomal subunit protein uL11A from Bacillus cereus (strain ATCC 14579 / DSM 31 / CCUG 7414 / JCM 2152 / NBRC 15305 / NCIMB 9373 / NCTC 2599 / NRRL B-3711).